Reading from the N-terminus, the 205-residue chain is MSGLIGKKIGMTSIFDENGKNIPCTVIEAGPCVVTQVRTNEVDGYEALQLGFDDKNEKHSTKAALGHFKKAGTVAKKKVVEFQDFATEQKLGDLIDVSIFEEGEFVDVQGVSKGKGFQGVVKRHGFGGVGQATHGQHNRLRAPGSVGASSYPSRVFKGMRMAGRMGGDNVKVQNLRVLKVVAEKNLLVVKGCIPGHKNSYVIIQK.

Belongs to the universal ribosomal protein uL3 family. Part of the 50S ribosomal subunit. Forms a cluster with proteins L14 and L19.

Its function is as follows. One of the primary rRNA binding proteins, it binds directly near the 3'-end of the 23S rRNA, where it nucleates assembly of the 50S subunit. This is Large ribosomal subunit protein uL3 from Flavobacterium johnsoniae (strain ATCC 17061 / DSM 2064 / JCM 8514 / BCRC 14874 / CCUG 350202 / NBRC 14942 / NCIMB 11054 / UW101) (Cytophaga johnsonae).